The sequence spans 174 residues: Small ribosomal subunit protein uS5 (174 aa).

One can recognise an S5 DRBM domain in the interval 18–81; the sequence is WQERVIQIRR…ADGKKHLIDI (64 aa).

It belongs to the universal ribosomal protein uS5 family. In terms of assembly, part of the 30S ribosomal subunit. Contacts proteins S4 and S8.

In terms of biological role, with S4 and S12 plays an important role in translational accuracy. Its function is as follows. Located at the back of the 30S subunit body where it stabilizes the conformation of the head with respect to the body. This Trichormus variabilis (strain ATCC 29413 / PCC 7937) (Anabaena variabilis) protein is Small ribosomal subunit protein uS5.